The chain runs to 104 residues: Small ribosomal subunit protein uS10 (104 aa).

Belongs to the universal ribosomal protein uS10 family. As to quaternary structure, part of the 30S ribosomal subunit.

Functionally, involved in the binding of tRNA to the ribosomes. The protein is Small ribosomal subunit protein uS10 of Alkaliphilus oremlandii (strain OhILAs) (Clostridium oremlandii (strain OhILAs)).